The following is a 395-amino-acid chain: Elongation factor Tu (395 aa).

The 195-residue stretch at 10–204 (KPHVNIGTIG…VVDEYIPTPV (195 aa)) folds into the tr-type G domain. The segment at 19–26 (GHVDHGKT) is G1. A GTP-binding site is contributed by 19 to 26 (GHVDHGKT). Thr26 is a binding site for Mg(2+). The interval 60-64 (GITIN) is G2. A G3 region spans residues 81–84 (DAPG). GTP-binding positions include 81–85 (DAPGH) and 136–139 (NKTD). The interval 136-139 (NKTD) is G4. A G5 region spans residues 174–176 (SAL).

It belongs to the TRAFAC class translation factor GTPase superfamily. Classic translation factor GTPase family. EF-Tu/EF-1A subfamily. Monomer.

It localises to the cytoplasm. The enzyme catalyses GTP + H2O = GDP + phosphate + H(+). In terms of biological role, GTP hydrolase that promotes the GTP-dependent binding of aminoacyl-tRNA to the A-site of ribosomes during protein biosynthesis. The polypeptide is Elongation factor Tu (Lactiplantibacillus plantarum (strain ATCC BAA-793 / NCIMB 8826 / WCFS1) (Lactobacillus plantarum)).